The sequence spans 563 residues: Arginine--tRNA ligase (563 aa).

The 'HIGH' region motif lies at 121–131 (PNIAKPMSMGH).

Belongs to the class-I aminoacyl-tRNA synthetase family. As to quaternary structure, monomer.

The protein resides in the cytoplasm. It carries out the reaction tRNA(Arg) + L-arginine + ATP = L-arginyl-tRNA(Arg) + AMP + diphosphate. In Leuconostoc citreum (strain KM20), this protein is Arginine--tRNA ligase.